Reading from the N-terminus, the 348-residue chain is Dihydroorotase (348 aa).

Positions 17 and 19 each coordinate Zn(2+). Substrate is bound by residues 19 to 21 (HLR) and Asn-45. Lys-103, His-140, and His-178 together coordinate Zn(2+). Lys-103 carries the post-translational modification N6-carboxylysine. His-140 is a binding site for substrate. Residue Leu-223 coordinates substrate. Asp-251 is a Zn(2+) binding site. Residue Asp-251 is part of the active site. Substrate contacts are provided by His-255 and Ala-267.

It belongs to the metallo-dependent hydrolases superfamily. DHOase family. Class II DHOase subfamily. Homodimer. Requires Zn(2+) as cofactor.

It catalyses the reaction (S)-dihydroorotate + H2O = N-carbamoyl-L-aspartate + H(+). Its pathway is pyrimidine metabolism; UMP biosynthesis via de novo pathway; (S)-dihydroorotate from bicarbonate: step 3/3. Catalyzes the reversible cyclization of carbamoyl aspartate to dihydroorotate. This chain is Dihydroorotase, found in Escherichia coli (strain UTI89 / UPEC).